The following is a 151-amino-acid chain: Probable transcriptional regulator syrB2 (151 aa).

The disordered stretch occupies residues 1–61 (MADESNTGSI…PRRYSEQQRK (61 aa)). Over residues 11-23 (AAAVAPNADVKAP) the composition is skewed to low complexity. Positions 24–35 (AAKKKRSPRRQK) are enriched in basic residues.

Belongs to the SyrB family.

Its function is as follows. Seems to affect the transcription of cya3. May be negatively autoregulated. In Rhizobium meliloti (strain 1021) (Ensifer meliloti), this protein is Probable transcriptional regulator syrB2 (syrB2).